Reading from the N-terminus, the 551-residue chain is Glucans biosynthesis protein D (551 aa).

The segment at residues 1-32 (MDRRRFIKGSMAMAAVCGTSGIASLFSQAAFA) is a signal peptide (tat-type signal).

This sequence belongs to the OpgD/OpgG family. Predicted to be exported by the Tat system. The position of the signal peptide cleavage has not been experimentally proven.

The protein resides in the periplasm. The protein operates within glycan metabolism; osmoregulated periplasmic glucan (OPG) biosynthesis. Its function is as follows. Probably involved in the control of the structural glucose backbone of osmoregulated periplasmic glucans (OPGs). The protein is Glucans biosynthesis protein D of Escherichia coli O1:K1 / APEC.